The primary structure comprises 308 residues: MTEDKKVSVSMFIKELELEVVHKGENTDYEIISSDINRPALQFAGFFEHFAYDRVQVIGKGEHDYFGTLDRATRLRRLEKLFSYEIPVLVLARGLDFSSDTINMAKKYNRIIIRSQMSTTKFINKASGYLSEKLAPSKTVHGVLVDIYGIGVLLMGKSGVGKSETALELVKRGHRLVADDAVEIRRIEDDMLVGEAPDILKYLMEIRGVGILDIKNLYGVGAIRTNKVVEMVAELEYWEEGKYYDRLGIDEEYMTLLDVPVEKIVIPVKPGRNLAMIIEVAAKNYRQKNMGYNAAKIFNEKLLKKLSD.

Catalysis depends on residues His141 and Lys162. Residue 156 to 163 (GKSGVGKS) participates in ATP binding. Ser163 lines the Mg(2+) pocket. Asp180 serves as the catalytic Proton acceptor; for phosphorylation activity. Proton donor; for dephosphorylation activity. An important for the catalytic mechanism of both phosphorylation and dephosphorylation region spans residues 204 to 213 (MEIRGVGILD). Glu205 serves as a coordination point for Mg(2+). Arg246 is a catalytic residue. The tract at residues 267-272 (PVKPGR) is important for the catalytic mechanism of dephosphorylation.

This sequence belongs to the HPrK/P family. Homohexamer. The cofactor is Mg(2+).

It carries out the reaction [HPr protein]-L-serine + ATP = [HPr protein]-O-phospho-L-serine + ADP + H(+). The catalysed reaction is [HPr protein]-O-phospho-L-serine + phosphate + H(+) = [HPr protein]-L-serine + diphosphate. Its function is as follows. Catalyzes the ATP- as well as the pyrophosphate-dependent phosphorylation of a specific serine residue in HPr, a phosphocarrier protein of the phosphoenolpyruvate-dependent sugar phosphotransferase system (PTS). HprK/P also catalyzes the pyrophosphate-producing, inorganic phosphate-dependent dephosphorylation (phosphorolysis) of seryl-phosphorylated HPr (P-Ser-HPr). The two antagonistic activities of HprK/P are regulated by several intracellular metabolites, which change their concentration in response to the absence or presence of rapidly metabolisable carbon sources (glucose, fructose, etc.) in the growth medium. Therefore, by controlling the phosphorylation state of HPr, HPrK/P is a sensor enzyme that plays a major role in the regulation of carbon metabolism and sugar transport: it mediates carbon catabolite repression (CCR), and regulates PTS-catalyzed carbohydrate uptake and inducer exclusion. The polypeptide is HPr kinase/phosphorylase (Peptoclostridium acidaminophilum (Eubacterium acidaminophilum)).